The following is a 339-amino-acid chain: Ketol-acid reductoisomerase (NADP(+)) (339 aa).

In terms of domain architecture, KARI N-terminal Rossmann spans 1–182; sequence MRVYYDRDAD…GGGRAGVIET (182 aa). NADP(+) contacts are provided by residues 24 to 27, arginine 48, serine 51, threonine 53, and 83 to 86; these read YGSQ and DELQ. Residue histidine 108 is part of the active site. Residue glycine 134 participates in NADP(+) binding. The KARI C-terminal knotted domain maps to 183 to 328; the sequence is TFKEECETDL…EKLRAMMPWI (146 aa). 4 residues coordinate Mg(2+): aspartate 191, glutamate 195, glutamate 227, and glutamate 231. Serine 252 serves as a coordination point for substrate.

The protein belongs to the ketol-acid reductoisomerase family. It depends on Mg(2+) as a cofactor.

It catalyses the reaction (2R)-2,3-dihydroxy-3-methylbutanoate + NADP(+) = (2S)-2-acetolactate + NADPH + H(+). The enzyme catalyses (2R,3R)-2,3-dihydroxy-3-methylpentanoate + NADP(+) = (S)-2-ethyl-2-hydroxy-3-oxobutanoate + NADPH + H(+). The protein operates within amino-acid biosynthesis; L-isoleucine biosynthesis; L-isoleucine from 2-oxobutanoate: step 2/4. It participates in amino-acid biosynthesis; L-valine biosynthesis; L-valine from pyruvate: step 2/4. Involved in the biosynthesis of branched-chain amino acids (BCAA). Catalyzes an alkyl-migration followed by a ketol-acid reduction of (S)-2-acetolactate (S2AL) to yield (R)-2,3-dihydroxy-isovalerate. In the isomerase reaction, S2AL is rearranged via a Mg-dependent methyl migration to produce 3-hydroxy-3-methyl-2-ketobutyrate (HMKB). In the reductase reaction, this 2-ketoacid undergoes a metal-dependent reduction by NADPH to yield (R)-2,3-dihydroxy-isovalerate. The chain is Ketol-acid reductoisomerase (NADP(+)) from Xanthobacter autotrophicus (strain ATCC BAA-1158 / Py2).